Reading from the N-terminus, the 342-residue chain is Flotillin-like protein FloA (342 aa).

2 helical membrane-spanning segments follow: residues 18-38 (FFIF…GKFI) and 39-59 (SLWF…IIGM).

This sequence belongs to the flotillin-like FloA family. In terms of assembly, homooligomerizes.

The protein localises to the cell membrane. It localises to the membrane raft. Found in functional membrane microdomains (FMM) that may be equivalent to eukaryotic membrane rafts. FMMs are highly dynamic and increase in number as cells age. Flotillins are thought to be important factors in membrane fluidity. The protein is Flotillin-like protein FloA of Protochlamydia amoebophila (strain UWE25).